The primary structure comprises 257 residues: 5-keto-4-deoxy-D-glucarate aldolase (257 aa).

The active-site Proton acceptor is histidine 51. Glutamine 152 contacts substrate. Mg(2+) is bound at residue glutamate 154. The substrate site is built by serine 179 and aspartate 180. Residue aspartate 180 participates in Mg(2+) binding.

The protein belongs to the HpcH/HpaI aldolase family. KDGluc aldolase subfamily. As to quaternary structure, homohexamer; trimer of dimers. The cofactor is Mg(2+).

It catalyses the reaction 5-dehydro-4-deoxy-D-glucarate = 2-hydroxy-3-oxopropanoate + pyruvate. The enzyme catalyses 2-dehydro-3-deoxy-D-glucarate = 2-hydroxy-3-oxopropanoate + pyruvate. It functions in the pathway carbohydrate acid metabolism; galactarate degradation; D-glycerate from galactarate: step 2/3. Its function is as follows. Catalyzes the reversible retro-aldol cleavage of both 5-keto-4-deoxy-D-glucarate and 2-keto-3-deoxy-D-glucarate to pyruvate and tartronic semialdehyde. The protein is 5-keto-4-deoxy-D-glucarate aldolase of Shigella boydii serotype 18 (strain CDC 3083-94 / BS512).